The chain runs to 529 residues: Bifunctional purine biosynthesis protein PurH (529 aa).

The MGS-like domain maps to 1-148 (MQQRRPVRRA…KNHKDVAIVV (148 aa)).

The protein belongs to the PurH family.

It catalyses the reaction (6R)-10-formyltetrahydrofolate + 5-amino-1-(5-phospho-beta-D-ribosyl)imidazole-4-carboxamide = 5-formamido-1-(5-phospho-D-ribosyl)imidazole-4-carboxamide + (6S)-5,6,7,8-tetrahydrofolate. The enzyme catalyses IMP + H2O = 5-formamido-1-(5-phospho-D-ribosyl)imidazole-4-carboxamide. The protein operates within purine metabolism; IMP biosynthesis via de novo pathway; 5-formamido-1-(5-phospho-D-ribosyl)imidazole-4-carboxamide from 5-amino-1-(5-phospho-D-ribosyl)imidazole-4-carboxamide (10-formyl THF route): step 1/1. It participates in purine metabolism; IMP biosynthesis via de novo pathway; IMP from 5-formamido-1-(5-phospho-D-ribosyl)imidazole-4-carboxamide: step 1/1. This is Bifunctional purine biosynthesis protein PurH from Klebsiella pneumoniae (strain 342).